The primary structure comprises 223 residues: ATP-dependent dethiobiotin synthetase BioD (223 aa).

11–16 lines the ATP pocket; the sequence is DIGKTY. Position 15 (Thr15) interacts with Mg(2+). Lys36 is an active-site residue. Thr40 contributes to the substrate binding site. Residues Asp50, 110 to 113, and 174 to 175 each bind ATP; these read EGAG and NN. Mg(2+)-binding residues include Asp50 and Glu110.

Belongs to the dethiobiotin synthetase family. In terms of assembly, homodimer. The cofactor is Mg(2+).

Its subcellular location is the cytoplasm. The catalysed reaction is (7R,8S)-7,8-diammoniononanoate + CO2 + ATP = (4R,5S)-dethiobiotin + ADP + phosphate + 3 H(+). The protein operates within cofactor biosynthesis; biotin biosynthesis; biotin from 7,8-diaminononanoate: step 1/2. Functionally, catalyzes a mechanistically unusual reaction, the ATP-dependent insertion of CO2 between the N7 and N8 nitrogen atoms of 7,8-diaminopelargonic acid (DAPA, also called 7,8-diammoniononanoate) to form a ureido ring. The chain is ATP-dependent dethiobiotin synthetase BioD from Staphylococcus epidermidis (strain ATCC 35984 / DSM 28319 / BCRC 17069 / CCUG 31568 / BM 3577 / RP62A).